Here is a 149-residue protein sequence, read N- to C-terminus: Nucleoside diphosphate kinase (149 aa).

ATP is bound by residues lysine 9, phenylalanine 57, arginine 85, threonine 91, arginine 102, and asparagine 112. Histidine 115 (pros-phosphohistidine intermediate) is an active-site residue.

It belongs to the NDK family. Homotetramer. Mg(2+) serves as cofactor.

Its subcellular location is the cytoplasm. The enzyme catalyses a 2'-deoxyribonucleoside 5'-diphosphate + ATP = a 2'-deoxyribonucleoside 5'-triphosphate + ADP. It carries out the reaction a ribonucleoside 5'-diphosphate + ATP = a ribonucleoside 5'-triphosphate + ADP. Functionally, major role in the synthesis of nucleoside triphosphates other than ATP. The ATP gamma phosphate is transferred to the NDP beta phosphate via a ping-pong mechanism, using a phosphorylated active-site intermediate. The polypeptide is Nucleoside diphosphate kinase (Staphylococcus epidermidis (strain ATCC 35984 / DSM 28319 / BCRC 17069 / CCUG 31568 / BM 3577 / RP62A)).